The chain runs to 467 residues: DNA methyltransferase 1-associated protein 1 (467 aa).

Composition is skewed to basic and acidic residues over residues 1–11 (MATGADVRDIL) and 26–48 (SKKD…LTFK). Positions 1–48 (MATGADVRDILELGGPEGDAASGTISKKDIINPDKKKSKKSSETLTFK) are disordered. Lysine 27 participates in a covalent cross-link: Glycyl lysine isopeptide (Lys-Gly) (interchain with G-Cter in SUMO2). The region spanning 149 to 199 (DDAWTKAETDHLFDLSRRFDLRFVVIHDRYDHQQFKKRSVEDLKERYYHIC) is the SANT domain. Lysine 214 participates in a covalent cross-link: Glycyl lysine isopeptide (Lys-Gly) (interchain with G-Cter in SUMO2). Positions 225–275 (RRKEQLERLYNRTPEQVAEEEYLLQELRKIEARKKEREKRSQDLQKLITAA) form a coiled coil. The span at 258-267 (KKEREKRSQD) shows a compositional bias: basic and acidic residues. Disordered stretches follow at residues 258-305 (KKER…PAVP) and 404-467 (LGGP…AKKP). Residues 406 to 422 (GPATPASGPGPASAEPA) are compositionally biased toward low complexity. A Phosphothreonine modification is found at threonine 445. Serine 448 carries the post-translational modification Phosphoserine.

In terms of assembly, component of the NuA4 histone acetyltransferase complex which contains the catalytic subunit KAT5/TIP60 and the subunits EP400, TRRAP/PAF400, BRD8/SMAP, EPC1, DMAP1/DNMAP1, RUVBL1/TIP49, RUVBL2, ING3, actin, ACTL6A/BAF53A, MORF4L1/MRG15, MORF4L2/MRGX, MRGBP, YEATS4/GAS41, VPS72/YL1 and MEAF6. Component of a NuA4-related complex which contains EP400, TRRAP/PAF400, SRCAP, BRD8/SMAP, EPC1, DMAP1/DNMAP1, RUVBL1/TIP49, RUVBL2, actin, ACTL6A/BAF53A, VPS72 and YEATS4/GAS41. DMAP1 also forms a complex with DNMT1 and HDAC2. Throughout S phase it interacts directly with the N-terminus of DNMT1, which serves to recruit DMAP1 to replication foci. DMAP1 interacts with ING1, a component of the mSin3A transcription repressor complex, although this interaction is not required for recruitment of ING1 to heterochromatin. Interacts directly with the transcriptional corepressor TSG101. Interacts with the pro-apoptotic protein DAXX. Interacts with URI1.

Its subcellular location is the nucleus. It is found in the cytoplasm. Functionally, involved in transcription repression and activation. Its interaction with HDAC2 may provide a mechanism for histone deacetylation in heterochromatin following replication of DNA at late firing origins. Can also repress transcription independently of histone deacetylase activity. May specifically potentiate DAXX-mediated repression of glucocorticoid receptor-dependent transcription. Component of the NuA4 histone acetyltransferase (HAT) complex which is involved in transcriptional activation of select genes principally by acetylation of nucleosomal histones H4 and H2A. This modification may both alter nucleosome - DNA interactions and promote interaction of the modified histones with other proteins which positively regulate transcription. This complex may be required for the activation of transcriptional programs associated with oncogene and proto-oncogene mediated growth induction, tumor suppressor mediated growth arrest and replicative senescence, apoptosis, and DNA repair. NuA4 may also play a direct role in DNA repair when recruited to sites of DNA damage. Participates in the nuclear localization of URI1 and increases its transcriptional corepressor activity. This chain is DNA methyltransferase 1-associated protein 1 (DMAP1), found in Homo sapiens (Human).